We begin with the raw amino-acid sequence, 628 residues long: Growth hormone receptor (628 aa).

An N-terminal signal peptide occupies residues 1-18; it reads MDLWQLLLTLAVVGSSNA. The Extracellular segment spans residues 19 to 266; the sequence is FVGREAVTVT…FTCEEEFQFP (248 aa). N-linked (GlcNAc...) asparagine glycosylation is found at Asn-33, Asn-40, and Asn-46. Disulfide bonds link Cys-56/Cys-66 and Cys-101/Cys-112. A glycan (N-linked (GlcNAc...) asparagine) is linked at Asn-115. A disulfide bond links Cys-126 and Cys-140. In terms of domain architecture, Fibronectin type-III spans 151 to 254; that stretch reads PPTGLNWTLM…EILYITLPQS (104 aa). 3 N-linked (GlcNAc...) asparagine glycosylation sites follow: Asn-156, Asn-161, and Asn-200. Positions 240–244 match the WSXWS motif motif; that stretch reads YGEFS. Residues 267–287 form a helical membrane-spanning segment; the sequence is WFLIMIFGIFGLTVMLLVVMF. The Cytoplasmic portion of the chain corresponds to 288 to 628; that stretch reads SKQQRIKMLI…STDQLNKIML (341 aa). A required for JAK2 binding region spans residues 294-379; the sequence is KMLILPPVPV…HQKSLNILGA (86 aa). The short motif at 297-305 is the Box 1 motif element; that stretch reads ILPPVPVPK. Residues 340 to 349 carry the UbE motif motif; it reads DSWVEFIELD. Ser-341 is modified (phosphoserine). Phosphotyrosine occurs at positions 483 and 585.

This sequence belongs to the type I cytokine receptor family. Type 1 subfamily. In terms of assembly, on growth hormone (GH) binding, forms homodimers and binds JAK2 via a box 1-containing domain. Post-translationally, the soluble form (GHBP) is produced by phorbol ester-promoted proteolytic cleavage at the cell surface (shedding) by ADAM17/TACE. Shedding is inhibited by growth hormone (GH) binding to the receptor probably due to a conformational change in GHR rendering the receptor inaccessible to ADAM17. On GH binding, phosphorylated on tyrosine residues in the cytoplasmic domain by JAK2. In terms of processing, ubiquitinated by the ECS(SOCS2) complex following ligand-binding and phosphorylation by JAK2, leading to its degradation by the proteasome. Regulation by the ECS(SOCS2) complex acts as a negative feedback loop of growth hormone receptor signaling. Ubiquitination is not sufficient for GHR internalization.

Its subcellular location is the cell membrane. The protein localises to the secreted. Functionally, receptor for pituitary gland growth hormone (GH1) involved in regulating postnatal body growth. On ligand binding, couples to the JAK2/STAT5 pathway. The soluble form (GHBP) acts as a reservoir of growth hormone in plasma and may be a modulator/inhibitor of GH signaling. In Cavia porcellus (Guinea pig), this protein is Growth hormone receptor (GHR).